A 405-amino-acid chain; its full sequence is Peroxisome biogenesis factor 3 (405 aa).

The Cytoplasmic portion of the chain corresponds to 1-26; the sequence is MENFQFEDLSPNKVSKVYQDLKKFGS. The helical transmembrane segment at 27–49 threads the bilayer; that stretch reads FLYNHKMGVFLVSFSSGVAYLYH. Residues 50–124 lie on the Peroxisomal side of the membrane; the sequence is NITQSHKRKQ…EKLKLTDQLK (75 aa). A helical membrane pass occupies residues 125-144; sequence VSIITKLFSVLYIIPMVTIF. At 145 to 405 the chain is on the cytoplasmic side; that stretch reads NRLQINLIGK…NDLDFNKVQF (261 aa).

It belongs to the peroxin-3 family.

The protein localises to the peroxisome membrane. In terms of biological role, involved in peroxisome biosynthesis. This is Peroxisome biogenesis factor 3 (pex3) from Dictyostelium discoideum (Social amoeba).